Here is a 283-residue protein sequence, read N- to C-terminus: E3 ubiquitin-protein ligase SGR9, amyloplastic (283 aa).

Residues 1-32 constitute an amyloplast transit peptide; sequence MEDENTTIIMASLSALSPSHLTNLTHSILSIS. The RING-type; atypical zinc-finger motif lies at 214–255; the sequence is CVICKEEMSEGRDVCEMPCQHFFHWKCILPWLSKKNTCPFCR.

In terms of processing, auto-ubiquitinated as part of the enzymatic reaction. In terms of tissue distribution, expressed in seedlings, hypocotyls, roots and stems. Present especially in hypocotyl and inflorescence endodermis, as well as in root cap columella, tissues that act as statocytes.

It localises to the plastid. It is found in the amyloplast. It catalyses the reaction S-ubiquitinyl-[E2 ubiquitin-conjugating enzyme]-L-cysteine + [acceptor protein]-L-lysine = [E2 ubiquitin-conjugating enzyme]-L-cysteine + N(6)-ubiquitinyl-[acceptor protein]-L-lysine.. It participates in protein modification; protein ubiquitination. Its function is as follows. E3 ubiquitin-protein ligase which accepts ubiquitin from an E2 ubiquitin-conjugating enzyme in the form of a thioester and then directly transfers the ubiquitin to targeted substrates. Modulates amyloplast dynamics and sedimentation in statocytes during inflorescence, hypocotyl and root gravitropism, probably by regulating amyloplast interaction with actin filaments (AFs) in endodermal cells. The sequence is that of E3 ubiquitin-protein ligase SGR9, amyloplastic (SGR9) from Arabidopsis thaliana (Mouse-ear cress).